The sequence spans 652 residues: MATSMGLLLLLLLLLTQPGAGTGADTEAVVCVGTACYTAHSGKLSAAEAQNHCNQNGGNLATVKSKEEAQHVQRVLAQLLRREAALTARMSKFWIGLQREKGKCLDPSLPLKGFSWVGGGEDTPYSNWHKELRNSCISKRCVSLLLDLSQPLLPSRLPKWSEGPCGSPGSPGSNIEGFVCKFSFKGMCRPLALGGPGQVTYTTPFQTTSSSLEAVPFASAANVACGEGDKDETQSHYFLCKEKAPDVFDWGSSGPLCVSPKYGCNFNNGGCHQDCFEGGDGSFLCGCRPGFRLLDDLVTCASRNPCSSSPCRGGATCVLGPHGKNYTCRCPQGYQLDSSQLDCVDVDECQDSPCAQECVNTPGGFRCECWVGYEPGGPGEGACQDVDECALGRSPCAQGCTNTDGSFHCSCEEGYVLAGEDGTQCQDVDECVGPGGPLCDSLCFNTQGSFHCGCLPGWVLAPNGVSCTMGPVSLGPPSGPPDEEDKGEKEGSTVPRAATASPTRGPEGTPKATPTTSRPSLSSDAPITSAPLKMLAPSGSPGVWREPSIHHATAASGPQEPAGGDSSVATQNNDGTDGQKLLLFYILGTVVAILLLLALALGLLVYRKRRAKREEKKEKKPQNAADSYSWVPERAESRAMENQYSPTPGTDC.

The signal sequence occupies residues 1–21; it reads MATSMGLLLLLLLLLTQPGAG. Residues 24–580 are Extracellular-facing; it reads ADTEAVVCVG…QNNDGTDGQK (557 aa). The region spanning 32 to 174 is the C-type lectin domain; that stretch reads VGTACYTAHS…CGSPGSPGSN (143 aa). 16 disulfides stabilise this stretch: Cys141-Cys165, Cys264-Cys275, Cys271-Cys285, Cys287-Cys300, Cys306-Cys317, Cys311-Cys328, Cys330-Cys343, Cys349-Cys358, Cys354-Cys367, Cys369-Cys383, Cys389-Cys400, Cys396-Cys409, Cys411-Cys425, Cys431-Cys443, Cys439-Cys452, and Cys454-Cys467. 2 EGF-like domains span residues 260–301 and 302–344; these read PKYG…VTCA and SRNP…LDCV. N-linked (GlcNAc...) asparagine glycosylation occurs at Asn325. The EGF-like 3; calcium-binding domain occupies 345 to 384; that stretch reads DVDECQDSPCAQECVNTPGGFRCECWVGYEPGGPGEGACQ. The EGF-like 4; calcium-binding domain occupies 385–426; sequence DVDECALGRSPCAQGCTNTDGSFHCSCEEGYVLAGEDGTQCQ. An EGF-like 5; calcium-binding domain is found at 427–468; that stretch reads DVDECVGPGGPLCDSLCFNTQGSFHCGCLPGWVLAPNGVSCT. Disordered stretches follow at residues 472–546 and 553–572; these read VSLG…VWRE and TAAS…ATQN. Positions 512-526 are enriched in polar residues; that stretch reads ATPTTSRPSLSSDAP. The chain crosses the membrane as a helical span at residues 581-601; it reads LLLFYILGTVVAILLLLALAL. Residues 602 to 652 are Cytoplasmic-facing; sequence GLLVYRKRRAKREEKKEKKPQNAADSYSWVPERAESRAMENQYSPTPGTDC. The segment at 611–652 is disordered; that stretch reads AKREEKKEKKPQNAADSYSWVPERAESRAMENQYSPTPGTDC. Residues 612-621 show a composition bias toward basic and acidic residues; that stretch reads KREEKKEKKP. Ser627 is subject to Phosphoserine. 2 positions are modified to phosphotyrosine: Tyr628 and Tyr644. Polar residues predominate over residues 640–652; the sequence is MENQYSPTPGTDC.

As to quaternary structure, homodimer. Interacts with C1QBP; the association may represent a cell surface C1q receptor. Interacts with surfactant protein A/SFTPA1. Interacts with multimerin-2/MMRN2. Interacts with DAG1; this interaction plays an important role in endothelial cell migration. Interacts with CBL. Interacts with IGFBP7. Interacts with VEGFR2. (Microbial infection) Interacts with hepatitis virus C/HCV core protein. N- and O-glycosylated. Post-translationally, phosphorylated on Tyr-628 and Tyr-644 by SRC; these phosphorylations promote endothelial cell adhesion and migration. Highly expressed in endothelial cells, platelets, cells of myeloid origin, such as monocytes and neutrophils. Not expressed in cells of lymphoid origin.

It localises to the cell membrane. Cell surface receptor that plays a role in various physiological processes including inflammation, phagocytosis, and cell adhesion. Plays a role in phagocytosis and enhances the uptake of apoptotic cells and immune complexes by acting as a receptor for defense collagens including surfactant protein A/SFTPA1, C1q, and mannose-binding lectin (MBL2). Plays a role in the regulation of endothelial cell function and adhesion by activating angiogenesis. Mechanistically, exerts its angiogenic function by associating with beta-dystroglycan, leading to SRC-dependent phosphorylation and subsequent recruitment of CBL. In turn, CBL provides a docking site for downstream signaling components, such as CRKL to enhance cell migration. Participates in angiogenesis also by acting as a receptor for the ECM pan-endothelial glycoprotein multimerin-2/MMRN2 and IGFBP7 ligands. Both ligands play a non-redundant role in CD93-mediated endothelial cell function. Acts as a key regulator of endothelial barrier function through modulating VEGFR2 function. This Homo sapiens (Human) protein is Complement component C1q receptor (CD93).